Consider the following 221-residue polypeptide: Guanylate kinase (221 aa).

A Guanylate kinase-like domain is found at 20–199 (GLMFILSSPS…CFGKVREILA (180 aa)). 27–34 (SPSGAGKT) provides a ligand contact to ATP.

It belongs to the guanylate kinase family.

It is found in the cytoplasm. The catalysed reaction is GMP + ATP = GDP + ADP. Its function is as follows. Essential for recycling GMP and indirectly, cGMP. This is Guanylate kinase from Novosphingobium aromaticivorans (strain ATCC 700278 / DSM 12444 / CCUG 56034 / CIP 105152 / NBRC 16084 / F199).